Consider the following 520-residue polypeptide: Glutamate--cysteine ligase (520 aa).

Belongs to the glutamate--cysteine ligase type 1 family. Type 1 subfamily.

It catalyses the reaction L-cysteine + L-glutamate + ATP = gamma-L-glutamyl-L-cysteine + ADP + phosphate + H(+). It participates in sulfur metabolism; glutathione biosynthesis; glutathione from L-cysteine and L-glutamate: step 1/2. This Leptospira interrogans serogroup Icterohaemorrhagiae serovar Lai (strain 56601) protein is Glutamate--cysteine ligase.